The chain runs to 288 residues: NADPH-dependent aldehyde reductase 1, chloroplastic (288 aa).

A compositionally biased stretch (basic and acidic residues) spans 1–18 (MASEKQKQHAQPGKEHVM). A disordered region spans residues 1 to 32 (MASEKQKQHAQPGKEHVMESSPQFSSSDYQPS). Residues 20 to 32 (SSPQFSSSDYQPS) are compositionally biased toward polar residues. NADP(+) is bound at residue 47–71 (SGIGRAVGYCFASEGATVAFTYVKG). A substrate-binding site is contributed by serine 179. Catalysis depends on tyrosine 192, which acts as the Proton acceptor.

Belongs to the short-chain dehydrogenases/reductases (SDR) family.

It localises to the plastid. The protein localises to the chloroplast. Aldehyde reductase that catalyzes the reduction of the aldehyde carbonyl groups on saturated and alpha,beta-unsaturated aldehydes with more than 5 carbons. No activity on alpha,beta-unsaturated ketones. Can use propionaldehyde, butyraldehyde, methylglyoxal, (e)-2-pentenal, (E)-2-hexenal, (Z)-3-hexenal and (E)-2-nonenal as substrates, but not propenal (acrolein), crotonaldehyde, 2-butanone, 3-buten-2-one or 1-penten-3-one. May act as a short alcohol-polyol-sugar dehydrogenase possibly related to carbohydrate metabolism and the acquisition of desiccation tolerance. May also be involved in signal transduction. The protein is NADPH-dependent aldehyde reductase 1, chloroplastic of Arabidopsis thaliana (Mouse-ear cress).